We begin with the raw amino-acid sequence, 250 residues long: MANIHIVIPARLKSTRLPNKMLADIAGKPMIQRVYEQVTKSKFDSIIIATDSQKIKDIAESFGAKVVLTRDDHQSGTDRIAEAVTKLGFAYEDIVVNVQGDEPLIPIENIEQAAQLLIDKSEAVVSTLCEKITDVEDIYNPNNVKVVFDKNNYALYFSRASIPFERGFSEKEQINISEFFRHIGIYAYRVAFLKHYAELTVSPIEKYEALEQLRVLYNGYKIAIEQSAKSTPAGVDTLQDLEKVRKLFNV.

Belongs to the KdsB family.

The protein resides in the cytoplasm. The enzyme catalyses 3-deoxy-alpha-D-manno-oct-2-ulosonate + CTP = CMP-3-deoxy-beta-D-manno-octulosonate + diphosphate. It participates in nucleotide-sugar biosynthesis; CMP-3-deoxy-D-manno-octulosonate biosynthesis; CMP-3-deoxy-D-manno-octulosonate from 3-deoxy-D-manno-octulosonate and CTP: step 1/1. Its pathway is bacterial outer membrane biogenesis; lipopolysaccharide biosynthesis. Activates KDO (a required 8-carbon sugar) for incorporation into bacterial lipopolysaccharide in Gram-negative bacteria. The polypeptide is 3-deoxy-manno-octulosonate cytidylyltransferase (Francisella tularensis subsp. holarctica (strain LVS)).